We begin with the raw amino-acid sequence, 144 residues long: MRHYEIIFIVHPDQSEQVSAMIERYSNMITERSGGIHRLEDWGRRQLTYPIQKLHKAHYILMNIECDQESLNELEHSFKFNDAILRHLVIRMNGPVTTPSPMMQDDKSKPDENSRGTAAPTVNVADDSASGAQVVAAEENDTQS.

Residues 95–144 (PVTTPSPMMQDDKSKPDENSRGTAAPTVNVADDSASGAQVVAAEENDTQS) form a disordered region. Residues 104–114 (QDDKSKPDENS) show a composition bias toward basic and acidic residues.

Belongs to the bacterial ribosomal protein bS6 family.

Binds together with bS18 to 16S ribosomal RNA. The sequence is that of Small ribosomal subunit protein bS6 from Nitrosomonas eutropha (strain DSM 101675 / C91 / Nm57).